We begin with the raw amino-acid sequence, 413 residues long: Alpha-1-antitrypsin-like protein CM55-ST (413 aa).

The signal sequence occupies residues 1–24 (MPSSISWGLLLLAALSCLGPGSLA). Glutamine 25 is modified (pyrrolidone carboxylic acid). 4 N-linked (GlcNAc...) asparagine glycosylation sites follow: asparagine 65, asparagine 102, asparagine 165, and asparagine 266. The RCL stretch occupies residues 368 to 387 (GGTVLGNIRSTLRYEVIFDR).

Belongs to the serpin family. Expressed in liver.

The protein is Alpha-1-antitrypsin-like protein CM55-ST of Tamias sibiricus (Siberian chipmunk).